The sequence spans 551 residues: Chaperonin GroEL (551 aa).

Residues 29-32 (TMGP), Lys-50, 86-90 (DGTTT), Gly-414, 478-480 (NAA), and Asp-494 each bind ATP.

This sequence belongs to the chaperonin (HSP60) family. Forms a cylinder of 14 subunits composed of two heptameric rings stacked back-to-back. Interacts with the co-chaperonin GroES.

Its subcellular location is the cytoplasm. It catalyses the reaction ATP + H2O + a folded polypeptide = ADP + phosphate + an unfolded polypeptide.. Its function is as follows. Together with its co-chaperonin GroES, plays an essential role in assisting protein folding. The GroEL-GroES system forms a nano-cage that allows encapsulation of the non-native substrate proteins and provides a physical environment optimized to promote and accelerate protein folding. This chain is Chaperonin GroEL, found in Legionella jeonii.